Here is a 178-residue protein sequence, read N- to C-terminus: Caveolin-1 (178 aa).

The residue at position 2 (Ser2) is an N-acetylserine. The residue at position 2 (Ser2) is a Phosphoserine. Positions 2–94 (SGGKYVDSEG…WKASFTTFTV (93 aa)) are required for homooligomerization. At 2 to 104 (SGGKYVDSEG…TKYWFYRLLS (103 aa)) the chain is on the cytoplasmic side. Lys5 carries the N6-acetyllysine; alternate modification. Residue Lys5 forms a Glycyl lysine isopeptide (Lys-Gly) (interchain with G-Cter in ubiquitin); alternate linkage. Tyr6 carries the post-translational modification Phosphotyrosine. Phosphoserine is present on Ser9. Tyr14 is modified (phosphotyrosine; by ABL1). Tyr25 is modified (phosphotyrosine). Residues Lys26 and Lys30 each participate in a glycyl lysine isopeptide (Lys-Gly) (interchain with G-Cter in ubiquitin) cross-link. The residue at position 37 (Ser37) is a Phosphoserine. Glycyl lysine isopeptide (Lys-Gly) (interchain with G-Cter in ubiquitin) cross-links involve residues Lys39, Lys47, and Lys57. Positions 82–94 (DGIWKASFTTFTV) are interaction with CAVIN3. Residues 105–125 (ALFGIPMALVWGIYFAILSFL) constitute an intramembrane region (helical). The Cytoplasmic portion of the chain corresponds to 126 to 178 (HIWAVVPCIKSFLIEIQCISRVYSIYVHTVCDPLFEAVGKIFSNVRINLQKEI). An interacts with SPRY1, SPRY2, SPRY3 and SPRY4 region spans residues 131-142 (VPCIKSFLIEIQ). 3 S-palmitoyl cysteine lipidation sites follow: Cys133, Cys143, and Cys156. The interacts with SPRY1, SPRY2, and SPRY4 stretch occupies residues 149 to 160 (SIYVHTVCDPLF). The interacts with SPRY1, SPRY2, SPRY3 and SPRY4 stretch occupies residues 167-178 (FSNVRINLQKEI).

It belongs to the caveolin family. In terms of assembly, homooligomer. Interacts with GLIPR2. Interacts with NOSTRIN. Interacts with SNAP25 and STX1A. Interacts (via the N-terminus) with DPP4; the interaction is direct. Interacts with CTNNB1, CDH1 and JUP. Interacts with PACSIN2; this interaction induces membrane tubulation. Interacts with SLC7A9. Interacts with BMX and BTK. Interacts with TGFBR1. Interacts with CAVIN3 (via leucine-zipper domain) in a cholesterol-sensitive manner. Interacts with CAVIN1. Interacts with EHD2 in a cholesterol-dependent manner. Forms a ternary complex with UBXN6 and VCP; mediates CAV1 targeting to lysosomes for degradation. Interacts with ABCG1; this interaction regulates ABCG1-mediated cholesterol efflux. Interacts with NEU3; this interaction enhances NEU3 sialidase activity within caveola. Interacts (via C-terminus) with SPRY1, SPRY2 (via C-terminus), SPRY3, and SPRY4. Interacts with IGFBP5; this interaction allows trafficking of IGFBP5 from the plasma membrane to the nucleus. Phosphorylated at Tyr-14 by ABL1 in response to oxidative stress. In terms of processing, ubiquitinated. Undergo monoubiquitination and multi- and/or polyubiquitination. Monoubiquitination of N-terminal lysines promotes integration in a ternary complex with UBXN6 and VCP which promotes oligomeric CAV1 targeting to lysosomes for degradation. Ubiquitinated by ZNRF1; leading to degradation and modulation of the TLR4-mediated immune response.

It localises to the golgi apparatus membrane. It is found in the cell membrane. The protein localises to the membrane. The protein resides in the caveola. Its subcellular location is the membrane raft. Its function is as follows. May act as a scaffolding protein within caveolar membranes. Forms a stable heterooligomeric complex with CAV2 that targets to lipid rafts and drives caveolae formation. Mediates the recruitment of CAVIN proteins (CAVIN1/2/3/4) to the caveolae. Interacts directly with G-protein alpha subunits and can functionally regulate their activity. Involved in the costimulatory signal essential for T-cell receptor (TCR)-mediated T-cell activation. Its binding to DPP4 induces T-cell proliferation and NF-kappa-B activation in a T-cell receptor/CD3-dependent manner. Recruits CTNNB1 to caveolar membranes and may regulate CTNNB1-mediated signaling through the Wnt pathway. Negatively regulates TGFB1-mediated activation of SMAD2/3 by mediating the internalization of TGFBR1 from membrane rafts leading to its subsequent degradation. Binds 20(S)-hydroxycholesterol (20(S)-OHC). This chain is Caveolin-1 (CAV1), found in Papio anubis (Olive baboon).